We begin with the raw amino-acid sequence, 474 residues long: Replication factor C large subunit (474 aa).

45–52 provides a ligand contact to ATP; it reads GPPGCGKT. Residues 415–468 are compositionally biased toward basic and acidic residues; sequence DKKTNNKKGKENKTKNTTKKIKEIKETPKKEEVKEPKKQIEKQKSEKKEPKKQM. The interval 415-474 is disordered; that stretch reads DKKTNNKKGKENKTKNTTKKIKEIKETPKKEEVKEPKKQIEKQKSEKKEPKKQMTLESFF.

It belongs to the activator 1 small subunits family. RfcL subfamily. Heteromultimer composed of small subunits (RfcS) and large subunits (RfcL).

Part of the RFC clamp loader complex which loads the PCNA sliding clamp onto DNA. The sequence is that of Replication factor C large subunit from Methanococcus aeolicus (strain ATCC BAA-1280 / DSM 17508 / OCM 812 / Nankai-3).